Reading from the N-terminus, the 476-residue chain is uncharacterized protein (476 aa).

Over residues 274-283 the composition is skewed to basic and acidic residues; the sequence is GKGVKIETET. Residues 274-294 are disordered; it reads GKGVKIETETRSSSSSDGETL.

This is an uncharacterized protein from Citrus psorosis virus (isolate Spain/P-121) (CPsV).